The primary structure comprises 131 residues: Phosphoribosyl-AMP cyclohydrolase (131 aa).

Mg(2+) is bound at residue Asp-80. Cys-81 provides a ligand contact to Zn(2+). Positions 82 and 84 each coordinate Mg(2+). 2 residues coordinate Zn(2+): Cys-98 and Cys-105.

This sequence belongs to the PRA-CH family. As to quaternary structure, homodimer. The cofactor is Mg(2+). Zn(2+) is required as a cofactor.

The protein resides in the cytoplasm. It catalyses the reaction 1-(5-phospho-beta-D-ribosyl)-5'-AMP + H2O = 1-(5-phospho-beta-D-ribosyl)-5-[(5-phospho-beta-D-ribosylamino)methylideneamino]imidazole-4-carboxamide. Its pathway is amino-acid biosynthesis; L-histidine biosynthesis; L-histidine from 5-phospho-alpha-D-ribose 1-diphosphate: step 3/9. Its function is as follows. Catalyzes the hydrolysis of the adenine ring of phosphoribosyl-AMP. This chain is Phosphoribosyl-AMP cyclohydrolase, found in Azoarcus sp. (strain BH72).